We begin with the raw amino-acid sequence, 905 residues long: Lateral signaling target protein 2 homolog (905 aa).

Lysine 87 participates in a covalent cross-link: Glycyl lysine isopeptide (Lys-Gly) (interchain with G-Cter in ubiquitin). Serine 334 carries the post-translational modification Phosphoserine. A disordered region spans residues 354-441 (DEMSSLLSPP…RGQDGQSGEV (88 aa)). Polar residues-rich tracts occupy residues 358–367 (SLLSPPSACQ) and 418–437 (PGNT…QDGQ). Threonine 512 is modified (phosphothreonine). 2 disordered regions span residues 516 to 552 (NPKS…DNSH) and 589 to 691 (PGSV…RGDV). Composition is skewed to basic and acidic residues over residues 542–552 (PRAEGTGDNSH) and 605–615 (GGDKEPERIDE). A compositionally biased stretch (polar residues) spans 647-656 (SGPQVDTASR). Residues 659–678 (GEGEVKGQPEPEARKQDPEK) show a composition bias toward basic and acidic residues. The FYVE-type zinc finger occupies 835–895 (DEACGFCTSC…VCTHCYMFHV (61 aa)). Residues cysteine 841, cysteine 844, cysteine 857, cysteine 860, cysteine 865, cysteine 868, and cysteine 887 each contribute to the Zn(2+) site. At threonine 888 the chain carries Phosphothreonine; by MAP2K. Cysteine 890 contributes to the Zn(2+) binding site.

Belongs to the lst-2 family. As to quaternary structure, interacts with TRIM3. In terms of processing, monoubiquitination at Lys-87 prevents binding to phosphatidylinositol 3-phosphate (PI3P) and localization to early endosome membranes. In terms of tissue distribution, enriched in brain (at protein level).

It is found in the cytoplasm. The protein resides in the cytosol. The protein localises to the early endosome membrane. Its function is as follows. Negative regulator of epidermal growth factor receptor (EGFR) signaling. Acts by promoting EGFR degradation in endosomes when not monoubiquitinated. This chain is Lateral signaling target protein 2 homolog (Zfyve28), found in Mus musculus (Mouse).